Consider the following 132-residue polypeptide: Interleukin-4 (132 aa).

A signal peptide spans 1–24; sequence MGLTSQLIPTLVCLLALTSTFVHG. Residues Asn28, Asn45, Asn62, Asn83, Asn95, and Asn101 are each glycosylated (N-linked (GlcNAc...) asparagine). Intrachain disulfides connect Cys48-Cys84 and Cys70-Cys104.

It belongs to the IL-4/IL-13 family.

It is found in the secreted. Functionally, participates in at least several B-cell activation processes as well as of other cell types. It is a costimulator of DNA-synthesis. It induces the expression of class II MHC molecules on resting B-cells. It enhances both secretion and cell surface expression of IgE and IgG1. It also regulates the expression of the low affinity Fc receptor for IgE (CD23) on both lymphocytes and monocytes. Positively regulates IL31RA expression in macrophages. Stimulates autophagy in dendritic cells by interfering with mTORC1 signaling and through the induction of RUFY4. The chain is Interleukin-4 (IL4) from Canis lupus familiaris (Dog).